The primary structure comprises 226 residues: Pathogenesis-related protein R major form (226 aa).

Residues 1–25 form the signal peptide; the sequence is MNFLKSFPFFAFLYFGQYFVAVTHA. Intrachain disulfides connect Cys34–Cys225, Cys75–Cys85, Cys90–Cys96, Cys140–Cys214, Cys145–Cys197, Cys153–Cys163, Cys167–Cys176, and Cys177–Cys184.

The protein belongs to the thaumatin family.

Its subcellular location is the vacuole. The protein is Pathogenesis-related protein R major form of Nicotiana tabacum (Common tobacco).